Consider the following 497-residue polypeptide: MADTGLLEALLQRVEQLDGGVDSQDVSAALGVDHQLVVGAVKSLQALGEVISAEQKSSKHWELTGEGREIAEQGSHEARVFNAIPAEGLPQNQLMKMASGKVGFSKAMSNKWIRLDKAHEGGPRVFRTVESIEDTVRDKLQLVQNGQSAKLEEKEKNELKKRKLLAEVTVKSYWITKGNSFSTTITKQETELTPEMIASGNWKEKKFKPYNFEAMGVAPDCGHLHPLMKVRTQFRQIFLEMGFTEMPTNNFIESSFWNFDSLFQPQQHPARDQHDTFFISDPALAHEFPRDYLERVKKVHSEGGYGSQGYKYDWKIEEAQKNLLRTHTTAVSARMLYKLAQQEKFTPVKYFSIDRVFRNETLDATHLAEFHQIEGVVADYGLTLGNLMGVLHQFFTKLGITKLRFKPAYNPYTEPSMEVFSYHEGLKKWVEVGNSGVFRPEMLLPMGLPEGVSVIAWGLSLERPTMIKYGINNIRELVGHKVNLQMVYDSPICRLDS.

L-phenylalanine contacts are provided by residues threonine 329, 372–374, and tyrosine 412; that span reads QIE. A Mg(2+)-binding site is contributed by glutamate 414. Phenylalanine 438 lines the L-phenylalanine pocket.

The protein belongs to the class-II aminoacyl-tRNA synthetase family. Phe-tRNA synthetase alpha subunit type 2 subfamily. In terms of assembly, heterotetramer; dimer of two heterodimers formed by alpha and beta subunits. Requires Mg(2+) as cofactor.

It is found in the cytoplasm. The enzyme catalyses tRNA(Phe) + L-phenylalanine + ATP = L-phenylalanyl-tRNA(Phe) + AMP + diphosphate + H(+). The sequence is that of Phenylalanine--tRNA ligase alpha subunit (farsa) from Danio rerio (Zebrafish).